The following is a 1105-amino-acid chain: Serine/threonine-protein kinase 4 homolog B (1105 aa).

Residues 23 to 274 (FDLIECLGRG…AKDLLKHSFF (252 aa)) form the Protein kinase domain. ATP contacts are provided by residues 29 to 37 (LGRGSFGSV) and Lys52. Catalysis depends on Asp142, which acts as the Proton acceptor. 3 disordered regions span residues 348 to 396 (STQI…TKNN), 411 to 482 (SSSA…RQPA), and 495 to 541 (PSFG…SLPL). Low complexity-rich tracts occupy residues 358–396 (QAQQQQQQAQQQQQQQQQQQQQYQPPSPNNNNRTTTKNN) and 411–437 (SSSASASTSPSPSSISSNGNKSGTTTN). Over residues 438 to 458 (DYHTGNGRTSSSSPQFGLQHQ) the composition is skewed to polar residues. Composition is skewed to low complexity over residues 459 to 473 (NSSNSFPSSPNTVPS) and 513 to 541 (PIGSPITKRPTPTMQSSTTTTTSSSSLPL). Residues 516–1105 (SPITKRPTPT…SEFDLDFYNN (590 aa)) form a calpain-like cysteine protease-like region. 4 domain III regions span residues 641-668 (EVSAKITMEPGYYVIIPATFEPNQEGSF), 791-830 (VHTQQQMPPGCYIIVPCTYDSRQEGSFTLTCYSDCQQGSI), 836-972 (SEQI…NVIQ), and 1076-1103 (VVIPSTFEPNIQDSFNLTIYSEFDLDFY).

In the N-terminal section; belongs to the protein kinase superfamily. STE Ser/Thr protein kinase family. STE20 subfamily. It in the C-terminal section; belongs to the peptidase C2 family. The cofactor is Mn(2+).

It catalyses the reaction L-seryl-[protein] + ATP = O-phospho-L-seryl-[protein] + ADP + H(+). It carries out the reaction L-threonyl-[protein] + ATP = O-phospho-L-threonyl-[protein] + ADP + H(+). In terms of biological role, probable serine/threonine-protein kinase. This is Serine/threonine-protein kinase 4 homolog B (krsB) from Dictyostelium discoideum (Social amoeba).